The sequence spans 315 residues: Transaldolase (315 aa).

Catalysis depends on K131, which acts as the Schiff-base intermediate with substrate.

The protein belongs to the transaldolase family. Type 1 subfamily. As to quaternary structure, homodimer.

It is found in the cytoplasm. The catalysed reaction is D-sedoheptulose 7-phosphate + D-glyceraldehyde 3-phosphate = D-erythrose 4-phosphate + beta-D-fructose 6-phosphate. The protein operates within carbohydrate degradation; pentose phosphate pathway; D-glyceraldehyde 3-phosphate and beta-D-fructose 6-phosphate from D-ribose 5-phosphate and D-xylulose 5-phosphate (non-oxidative stage): step 2/3. Functionally, transaldolase is important for the balance of metabolites in the pentose-phosphate pathway. The protein is Transaldolase of Haemophilus ducreyi (strain 35000HP / ATCC 700724).